The sequence spans 1792 residues: Brefeldin A-inhibited guanine nucleotide-exchange protein 2 (1792 aa).

Methionine 1 carries the post-translational modification N-acetylmethionine. A DCB; DCB:DCB domain and DCB:HUS domain interaction region spans residues 2-224 (QESQTKSMFV…KPQSPVIQAT (223 aa)). The interval 207-294 (ELEKPMQSKP…SRGTDSGAQE (88 aa)) is disordered. A phosphoserine mark is found at serine 214, serine 218, and serine 227. Residues 214–225 (SKPQSPVIQATA) show a composition bias toward polar residues. A compositionally biased stretch (polar residues) spans 233–243 (LKQSQAQSKPT). Threonine 244 carries the phosphothreonine modification. A phosphoserine mark is found at serine 355 and serine 356. Residues 515–535 (ADAQCVVDIYVNYDCDLNAAN) are HUS; DCB:HUS domain interaction. A Phosphoserine modification is found at serine 621. A Phosphothreonine modification is found at threonine 623. Serine 624 bears the Phosphoserine mark. Threonine 633 is subject to Phosphothreonine. The region spanning 661-792 (FNKKPKRGIQ…IIMLTTDLHS (132 aa)) is the SEC7 domain. A phosphoserine mark is found at serine 707, serine 1518, serine 1520, serine 1521, serine 1532, serine 1535, serine 1541, and serine 1789.

As to quaternary structure, homodimer. Interacts with ARFGEF1/BIG1; both proteins are probably part of the same or very similar macromolecular complexes. Interacts with PRKAR1A, PRKAR2A, PRKAR1B, PRKAR2B, PPP1CC, PDE3A, TNFRSF1A, MYCBP and EXOC7. Interacts with GABRB1, GABRB2 and GABRB3. Post-translationally, in vitro phosphorylated by PKA reducing its GEF activity and dephosphorylated by phosphatase PP1.

It is found in the cytoplasm. It localises to the membrane. The protein resides in the golgi apparatus. Its subcellular location is the perinuclear region. The protein localises to the trans-Golgi network. It is found in the endosome. It localises to the cytoskeleton. The protein resides in the microtubule organizing center. Its subcellular location is the centrosome. The protein localises to the cell projection. It is found in the dendrite. It localises to the cytoplasmic vesicle. The protein resides in the synapse. Its activity is regulated as follows. Inhibited by brefeldin A. Promotes guanine-nucleotide exchange on ARF1 and ARF3 and to a lower extent on ARF5 and ARF6. Promotes the activation of ARF1/ARF5/ARF6 through replacement of GDP with GTP. Involved in the regulation of Golgi vesicular transport. Required for the integrity of the endosomal compartment. Involved in trafficking from the trans-Golgi network (TGN) to endosomes and is required for membrane association of the AP-1 complex and GGA1. Seems to be involved in recycling of the transferrin receptor from recycling endosomes to the plasma membrane. Probably is involved in the exit of GABA(A) receptors from the endoplasmic reticulum. Involved in constitutive release of tumor necrosis factor receptor 1 via exosome-like vesicles; the function seems to involve PKA and specifically PRKAR2B. Proposed to act as A kinase-anchoring protein (AKAP) and may mediate crosstalk between Arf and PKA pathways. The chain is Brefeldin A-inhibited guanine nucleotide-exchange protein 2 (Arfgef2) from Mus musculus (Mouse).